The primary structure comprises 238 residues: MIAFIVLLSLAAVLQQSSGTVDFASESSNKKDYRKEIVDKHNALRRSVKPTARNMLQMEWNSHAAQNAKRWADRCTFAHSPPHTRTVGQLRCGENIFMSSQPFAWSGVVQAWYDEVKKFVYGIGAKPPGSVIGHYTQVVWYKSHLLGCASAKCSSTKYLYVCQYCPAGNIRGSIATPYKSGPTCGDCPSACVNGLCTNPCKYEDAFTNCNELAKETKCKTEWIKSKCPATCFCHTEII.

The first 19 residues, 1–19, serve as a signal peptide directing secretion; sequence MIAFIVLLSLAAVLQQSSG. The SCP domain occupies 38–164; sequence VDKHNALRRS…STKYLYVCQY (127 aa). Disulfide bonds link Cys75/Cys153, Cys92/Cys165, Cys148/Cys162, Cys184/Cys191, Cys187/Cys196, Cys200/Cys233, Cys209/Cys227, and Cys218/Cys231. The 34-residue stretch at 200 to 233 folds into the ShKT domain; the sequence is CKYEDAFTNCNELAKETKCKTEWIKSKCPATCFC.

It belongs to the CRISP family. Expressed by the venom gland.

It localises to the secreted. Its function is as follows. Blocks olfactory (CNGA2) and retinal (CNGA1) CNG channel currents. Does not affect neither depolarization- nor caffeine-induced contraction of smooth muscle. The polypeptide is Cysteine-rich venom protein (Drysdalia coronoides (White-lipped snake)).